The chain runs to 321 residues: Fe-S cluster assembly protein DRE2 (321 aa).

The tract at residues 1 to 140 (MNNTAHSMSE…RRPASSSVAE (140 aa)) is N-terminal SAM-like domain. Over residues 128–138 (IESRRPASSSV) the composition is skewed to polar residues. The segment at 128-166 (IESRRPASSSVAEKDSTASSGMGAVKLRRKPNENGGHQQ) is disordered. The interval 140-177 (EKDSTASSGMGAVKLRRKPNENGGHQQKKALLWATQPE) is linker. Positions 202, 217, 220, and 222 each coordinate [2Fe-2S] cluster. The interval 202 to 222 (CTVDFSAPRTRRKRACKGCTC) is fe-S binding site A. A disordered region spans residues 239–263 (QLDPSEVGGTGGKRTEVTTTVKGPN). 4 residues coordinate [4Fe-4S] cluster: cysteine 283, cysteine 286, cysteine 294, and cysteine 297. 2 short sequence motifs (cx2C motif) span residues 283 to 286 (CGSC) and 294 to 297 (CSSC). The interval 283 to 297 (CGSCFLGDAFRCSSC) is fe-S binding site B.

It belongs to the anamorsin family. In terms of assembly, monomer. Interacts with TAH18. Interacts with MIA40. The cofactor is [2Fe-2S] cluster. It depends on [4Fe-4S] cluster as a cofactor.

The protein resides in the cytoplasm. It is found in the mitochondrion intermembrane space. Component of the cytosolic iron-sulfur (Fe-S) protein assembly (CIA) machinery required for the maturation of extramitochondrial Fe-S proteins. Part of an electron transfer chain functioning in an early step of cytosolic Fe-S biogenesis, facilitating the de novo assembly of a [4Fe-4S] cluster on the scaffold complex CFD1-NBP35. Electrons are transferred to DRE2 from NADPH via the FAD- and FMN-containing protein TAH18. TAH18-DRE2 are also required for the assembly of the diferric tyrosyl radical cofactor of ribonucleotide reductase (RNR), probably by providing electrons for reduction during radical cofactor maturation in the catalytic small subunit RNR2. The chain is Fe-S cluster assembly protein DRE2 from Malassezia globosa (strain ATCC MYA-4612 / CBS 7966) (Dandruff-associated fungus).